Consider the following 492-residue polypeptide: Cytochrome P450 monooxygenase ATEG_03631 (492 aa).

Residues 10 to 30 form a helical membrane-spanning segment; sequence FATLNPMVVVAIPVFLFVISL. A glycan (N-linked (GlcNAc...) asparagine) is linked at asparagine 309. Cysteine 457 provides a ligand contact to heme.

This sequence belongs to the cytochrome P450 family. Heme serves as cofactor.

Its subcellular location is the membrane. It participates in secondary metabolite biosynthesis. Its function is as follows. Cytochrome P450 monooxygenase; part of the cluster A that mediates the biosynthesis of azasperpyranones, members of the azaphilone family that exhibit anti-cancer activities. Azasperpyranones are synthesized by 2 clusters, A and B. Cluster A is responsible for the production of the polyhydric phenol moiety while the azaphilonoid scaffold is produced by the cluster B. The non-reducing polyketide synthase ATEG_03629 produces 5-methyl orsellinic acid, which is then reduced to 5-methyl orsellinic aldehyde by the NRPS-like protein ATEG_03630. 5-methyl orsellinic aldehyde is then first hydroxylated by the FAD-dependent monooxygenase ATEG_03635 and subsequently hydroxylated by the cytochrome P450 monooxygenase ATEG_03631 to produce the unstable polyhydric phenol precursor of azasperpyranones. On the other hand, the polyketide synthase ATEG_07659 is responsible for producing the 3,5-dimethyloctadienone moiety from acetyl-CoA, three malonyl-CoA, and two S-adenosyl methionines (SAM). The 3,5-dimethyloctadienone moiety is then loaded onto the SAT domain of ATEG_07661 and extended with four malonyl-CoA and one SAM, which leads to the formation of 2,4-dihydroxy-6-(5,7-dimethyl-2-oxo-trans-3-trans-5-nonadienyl)-3-methylbenzaldehyde (compound 8) after reductive release and aldol condensation. The FAD-dependent monooxygenase ATEG_07662 is the next enzyme in the biosynthesis sequence and hydroxylates the side chain at the benzylic position of compound 8. In Aspergillus nidulans, afoF, the ortholog of the FAD-dependent oxygenase ATEG_07660, is the key enzyme for the biosynthesis of asperfuranone by catalyzing the hydroxylation at C-8 of to prevent the formation of a six-membered ring hemiacetal intermediate and thus facilitating the formation of a five-membered ring to produce asperfuranone. In Aspergillus terreus, ATEG_07660 is probably not functional, which leads to the formation of the six-membered ring hemiacetal intermediate presperpyranone instead of asperfuranone. Finally, ATEG_03636 is involved in the condensation of the polyhydric phenol moiety produced by cluster A and the perasperpyranone precursor produced by cluster B, to yield azasperpyranone A. Further modifications of azasperpyranone A result in the production of derivatives, including azasperpyranone B to F. This Aspergillus terreus (strain NIH 2624 / FGSC A1156) protein is Cytochrome P450 monooxygenase ATEG_03631.